The primary structure comprises 190 residues: RNA pyrophosphohydrolase (190 aa).

Residues 6-149 form the Nudix hydrolase domain; that stretch reads GYRPNVGIVL…KRGVYARALC (144 aa). The Nudix box signature appears at 38 to 59; the sequence is GGMHSDETPVEAMYRELNEEIG.

Belongs to the Nudix hydrolase family. RppH subfamily. A divalent metal cation is required as a cofactor.

Functionally, accelerates the degradation of transcripts by removing pyrophosphate from the 5'-end of triphosphorylated RNA, leading to a more labile monophosphorylated state that can stimulate subsequent ribonuclease cleavage. The polypeptide is RNA pyrophosphohydrolase (Xylella fastidiosa (strain M12)).